Consider the following 389-residue polypeptide: Phospho-N-acetylmuramoyl-pentapeptide-transferase (389 aa).

Transmembrane regions (helical) follow at residues 25-45 (RAVM…PWVI), 73-93 (TMGG…WADL), 97-117 (FIWI…VDDY), 135-155 (FWQT…VSEI), 190-210 (VSYP…IVGS), 222-242 (GLVI…AYVM), 258-278 (GAGE…AFLW), 286-306 (VFMG…IAVI), 311-331 (IVLF…MMQV), and 366-386 (QVVV…LSSL).

The protein belongs to the glycosyltransferase 4 family. MraY subfamily. It depends on Mg(2+) as a cofactor.

The protein resides in the cell inner membrane. The catalysed reaction is UDP-N-acetyl-alpha-D-muramoyl-L-alanyl-gamma-D-glutamyl-meso-2,6-diaminopimeloyl-D-alanyl-D-alanine + di-trans,octa-cis-undecaprenyl phosphate = di-trans,octa-cis-undecaprenyl diphospho-N-acetyl-alpha-D-muramoyl-L-alanyl-D-glutamyl-meso-2,6-diaminopimeloyl-D-alanyl-D-alanine + UMP. It functions in the pathway cell wall biogenesis; peptidoglycan biosynthesis. In terms of biological role, catalyzes the initial step of the lipid cycle reactions in the biosynthesis of the cell wall peptidoglycan: transfers peptidoglycan precursor phospho-MurNAc-pentapeptide from UDP-MurNAc-pentapeptide onto the lipid carrier undecaprenyl phosphate, yielding undecaprenyl-pyrophosphoryl-MurNAc-pentapeptide, known as lipid I. The protein is Phospho-N-acetylmuramoyl-pentapeptide-transferase of Polynucleobacter asymbioticus (strain DSM 18221 / CIP 109841 / QLW-P1DMWA-1) (Polynucleobacter necessarius subsp. asymbioticus).